The primary structure comprises 385 residues: S-type anion channel SLAH1 (385 aa).

At 1–42 the chain is on the cytoplasmic side; the sequence is MEIPRQEIHIEIDNSIPSSKEFKTGLADAKPVVLMSALRSLH. Residues 43 to 65 traverse the membrane as a helical segment; it reads AGYFRISLSLCSQALLWKIMIAP. At 66–81 the chain is on the extracellular side; it reads ESPSMSHMHSKLPSMA. A helical membrane pass occupies residues 82 to 102; it reads FHLLWYLALVTQVSLCFLYAL. At 103-114 the chain is on the cytoplasmic side; sequence KCIFFFDKVKEE. Residues 115 to 135 traverse the membrane as a helical segment; that stretch reads FLHYIGVNYLYAPSISWLLML. Residues 136 to 150 lie on the Extracellular side of the membrane; the sequence is QSAPMMEPNSVLYQT. The chain crosses the membrane as a helical span at residues 151–171; sequence LFWIFAVPVLTLDIKLYGQWF. Residues 172-176 are Cytoplasmic-facing; the sequence is TTEKR. A helical membrane pass occupies residues 177–197; it reads FLSMLANPASQVSVIANLVAA. Residues 198-207 lie on the Extracellular side of the membrane; it reads RGAAEMGWNE. Residues 208–228 form a helical membrane-spanning segment; sequence CALCMFSLGMVHYLVIFVTLY. At 229–243 the chain is on the cytoplasmic side; it reads QRLPGGNNFPAKLRP. A helical transmembrane segment spans residues 244-264; it reads IFFLFVAAPAMASLAWNSICG. A topological domain (extracellular) is located at residue Thr265. The chain crosses the membrane as a helical span at residues 266–286; the sequence is FDAVAKMLFFLSLFIFMSLVC. Topologically, residues 287 to 299 are cytoplasmic; the sequence is RPNLFKKSMKRFN. Residues 300-320 form a helical membrane-spanning segment; it reads VAWWAYSFPLTFLALDSVQYA. The Extracellular portion of the chain corresponds to 321–330; the sequence is QEVKDPVGSG. A helical membrane pass occupies residues 331–351; sequence LMLIFSSISVLIFLGMMVLTA. Topologically, residues 352 to 385 are cytoplasmic; the sequence is ANSNRLLRHDPVLGSATDPKDKQKTLSLNATNQN. Positions 366-385 are disordered; it reads SATDPKDKQKTLSLNATNQN. Residues 376–385 are compositionally biased toward polar residues; sequence TLSLNATNQN.

Belongs to the SLAC1 S-type anion channel family. In terms of assembly, homotrimer. In terms of tissue distribution, expressed in the vascular systems of root.

It is found in the cell membrane. Slow, weak voltage-dependent S-type anion efflux channel involved in maintenance of anion homeostasis. The chain is S-type anion channel SLAH1 (SLAH1) from Arabidopsis thaliana (Mouse-ear cress).